The sequence spans 622 residues: MALLQISEPGMAPAPHQRRLAVGIDLGTTNSLVAAVRNSVPEVLPDEAGRVLLPSVVRYLEKGGRRIGHEAKEQAATDPRNTIVSVKRFMGRGKAEVEGAANAPYEFVDAPGMVQIRTIDGVKSPVEVSAEILATLRYRAEDSLGDDLVGAVITVPAYFDDAQRQATKDAARLAGLNVLRLLNEPTAAAIAYGLDNAAEGLYAVYDLGGGTFDLSILKLTKGVFEVLAAGGDSALGGDDFDHALFGHVLAQAGIDAKTLAPEDVRLLLDRVRVLKEALSSAPEAALDVTLSSGAHLVQTISHDTFASLVEPLVQRTLTPTRKALRDAQVTPADIKGVVLVGGATRMPVIRDAVAKYFGQPPLVNLDPDQVVALGAAIQADLLAGNRGTGDDWLLLDVIPLSLGVETMGGLVEKIIPRNSTIPIARAQEFTTFKDGQTAMAIHVVQGERELVADCRSLARFELRGIPPMTAGAARIRVTYQVDADGLLSVFAREQLSGVEASVVVKPSYGLADDDIAKMLEDSFKTAEIDMRARALREAQVEAERMLEATQAALAADGELLETDERAQVDALAAALRAVAQGDDTNAIEAATKALADGTDEFAARRMDKSIKRALSGRRLDEI.

This sequence belongs to the heat shock protein 70 family.

Its function is as follows. Chaperone involved in the maturation of iron-sulfur cluster-containing proteins. Has a low intrinsic ATPase activity which is markedly stimulated by HscB. This chain is Chaperone protein HscA homolog, found in Burkholderia cenocepacia (strain HI2424).